A 312-amino-acid chain; its full sequence is Aquaglyceroporin-2 (312 aa).

A run of 6 helical transmembrane segments spans residues 78-98, 104-124, 151-171, 203-223, 239-259, and 286-306; these read FLGNFVLIYIAKGAVITSLLV, LGLTIGIGVAVTMALYVSLGI, YIAAQMLGTFLGAACAYGVFA, GIFYPIFAELISTAVLLLCVC, VAIGALVFVMVNNFGLASPLA, and YYFWVPLVVPFFGAILGLFLY.

It belongs to the MIP/aquaporin (TC 1.A.8) family.

The protein localises to the membrane. It carries out the reaction glycerol(in) = glycerol(out). The catalysed reaction is H2O(in) = H2O(out). It catalyses the reaction urea(in) = urea(out). Mediates water and glycerol transport across cell membranes. Permeable to urea. Permeable to methylamine/methylammonium. Permeable to dihydroxyacetone. This chain is Aquaglyceroporin-2, found in Trypanosoma brucei brucei.